Reading from the N-terminus, the 218-residue chain is MTHVRPVEIFHLGPIPIYSTVVNTWIIMILLLAGIFLATRKLSFIPRGAQHVLEMFLEFFYGLLEEIIGKEGRRYLPLVATLFIFILSLNLSWFIPGMKPPTMDLSTTAAFAVTTIILVQIFGIRKLGLRGYIRHFFQPAPFLFPLNVIEELVKPVSLSLRLFGNLFGEEMVVTILFLMIPFLLPTPIMLLGVLMGTIQAFVFTLLTITYIANFVHGH.

5 helical membrane-spanning segments follow: residues 17-37, 75-95, 104-124, 162-184, and 196-216; these read IYST…GIFL, YLPL…SWFI, DLST…IFGI, LFGN…PFLL, and GTIQ…NFVH.

It belongs to the ATPase A chain family. In terms of assembly, F-type ATPases have 2 components, CF(1) - the catalytic core - and CF(0) - the membrane proton channel. CF(1) has five subunits: alpha(3), beta(3), gamma(1), delta(1), epsilon(1). CF(0) has three main subunits: a(1), b(2) and c(9-12). The alpha and beta chains form an alternating ring which encloses part of the gamma chain. CF(1) is attached to CF(0) by a central stalk formed by the gamma and epsilon chains, while a peripheral stalk is formed by the delta and b chains. In this bacterium the a and b subunits are transcribed but do not seem to be translated, thus the ATP synthase consists of the alpha, beta, gamma, delta, epsilon and c subunits.

It is found in the cell membrane. Key component of the proton channel; it plays a direct role in the translocation of protons across the membrane. This is ATP synthase subunit a from Moorella thermoacetica (strain ATCC 39073 / JCM 9320).